A 262-amino-acid polypeptide reads, in one-letter code: Ubiquinone biosynthesis protein COQ4, mitochondrial (262 aa).

Zn(2+) contacts are provided by H154, D155, H158, and E170. The interval 243 to 262 (LGIEQPPDLRQMKKDMAKKK) is disordered. Positions 252-262 (RQMKKDMAKKK) are enriched in basic and acidic residues.

This sequence belongs to the COQ4 family. Component of a multi-subunit COQ enzyme complex, composed of at least COQ3, COQ4, COQ5, COQ6, COQ7 and COQ9. It depends on Zn(2+) as a cofactor.

Its subcellular location is the mitochondrion inner membrane. It catalyses the reaction a 4-hydroxy-3-methoxy-5-(all-trans-polyprenyl)benzoate + H(+) = a 2-methoxy-6-(all-trans-polyprenyl)phenol + CO2. The protein operates within cofactor biosynthesis; ubiquinone biosynthesis. In terms of biological role, lyase that catalyzes the C1-decarboxylation of 4-hydroxy-3-methoxy-5-(all-trans-polyprenyl)benzoic acid into 2-methoxy-6-(all-trans-polyprenyl)phenol during ubiquinone biosynthesis. The protein is Ubiquinone biosynthesis protein COQ4, mitochondrial of Yarrowia lipolytica (strain CLIB 122 / E 150) (Yeast).